The following is a 447-amino-acid chain: MAGFEANFDGLVGMTHHYAGLSVGNKASINNKDSVSNPRKAALQGLMKMKALADEGFIQGVLPPQQRPHIPALRNLGFVGSDEQILHKAAKYSPVLLSKLSSASSMWTANAATVSPSADSADQRVHFTVANLNNKLHRSLEIATTTAALKATFADQNYFVHHQALPQHEDFGDEGAANHNRLGGDYDSPGVQVFVYGRSVFRGGPVPKRYPARQTLEASEAIARLHRLNPAQTVFVQQNPVAIDSGVFHNDVIAVSNRNVLFHHQYAYLNQSQVLTEIRQKMAVLGQNFVSIEVPAEQISIKDAVDSYLFNSQLLSKIDGKMVLVVPEECRQHSAVWDYLQSLSAQTSAPINEVRVFDLRESMRNGGGPACLRLRVVLNDAEFRAVNPATLMNTQLYQRLTKWIEHHYRDELCASDLADPQLLCEVYTALDELTQILNLGSIYEFQR.

Substrate is bound by residues 19–28 (AGLSVGNKAS), Asn-110, and 137–138 (HR). Residue Glu-174 is part of the active site. Arg-213 provides a ligand contact to substrate. His-249 is an active-site residue. Substrate contacts are provided by Asp-251 and Asn-365. Cys-371 acts as the Nucleophile in catalysis.

Belongs to the succinylarginine dihydrolase family. Homodimer.

It carries out the reaction N(2)-succinyl-L-arginine + 2 H2O + 2 H(+) = N(2)-succinyl-L-ornithine + 2 NH4(+) + CO2. It functions in the pathway amino-acid degradation; L-arginine degradation via AST pathway; L-glutamate and succinate from L-arginine: step 2/5. Its function is as follows. Catalyzes the hydrolysis of N(2)-succinylarginine into N(2)-succinylornithine, ammonia and CO(2). The polypeptide is N-succinylarginine dihydrolase (Photorhabdus laumondii subsp. laumondii (strain DSM 15139 / CIP 105565 / TT01) (Photorhabdus luminescens subsp. laumondii)).